Reading from the N-terminus, the 791-residue chain is Endonuclease MutS2 (791 aa).

An ATP-binding site is contributed by 339-346 (GPNTGGKT). The region spanning 715-790 (LDLRGERYET…GSGVTIADLK (76 aa)) is the Smr domain.

This sequence belongs to the DNA mismatch repair MutS family. MutS2 subfamily. In terms of assembly, homodimer. Binds to stalled ribosomes, contacting rRNA.

Endonuclease that is involved in the suppression of homologous recombination and thus may have a key role in the control of bacterial genetic diversity. In terms of biological role, acts as a ribosome collision sensor, splitting the ribosome into its 2 subunits. Detects stalled/collided 70S ribosomes which it binds and splits by an ATP-hydrolysis driven conformational change. Acts upstream of the ribosome quality control system (RQC), a ribosome-associated complex that mediates the extraction of incompletely synthesized nascent chains from stalled ribosomes and their subsequent degradation. Probably generates substrates for RQC. The chain is Endonuclease MutS2 from Halothermothrix orenii (strain H 168 / OCM 544 / DSM 9562).